The sequence spans 90 residues: Probable Fe(2+)-trafficking protein (90 aa).

Belongs to the Fe(2+)-trafficking protein family.

Functionally, could be a mediator in iron transactions between iron acquisition and iron-requiring processes, such as synthesis and/or repair of Fe-S clusters in biosynthetic enzymes. This Coxiella burnetii (strain CbuK_Q154) (Coxiella burnetii (strain Q154)) protein is Probable Fe(2+)-trafficking protein.